We begin with the raw amino-acid sequence, 399 residues long: Acetate kinase (399 aa).

Asn8 lines the Mg(2+) pocket. Lys15 contacts ATP. Arg89 is a substrate binding site. Asp146 functions as the Proton donor/acceptor in the catalytic mechanism. Residues 206–210, 283–285, and 331–335 each bind ATP; these read HVGNG, DMR, and GMGEN. Glu383 contributes to the Mg(2+) binding site.

The protein belongs to the acetokinase family. As to quaternary structure, homodimer. Mg(2+) serves as cofactor. Mn(2+) is required as a cofactor.

It is found in the cytoplasm. It carries out the reaction acetate + ATP = acetyl phosphate + ADP. It functions in the pathway metabolic intermediate biosynthesis; acetyl-CoA biosynthesis; acetyl-CoA from acetate: step 1/2. Its function is as follows. Catalyzes the formation of acetyl phosphate from acetate and ATP. Can also catalyze the reverse reaction. The protein is Acetate kinase of Streptococcus equi subsp. equi (strain 4047).